Consider the following 849-residue polypeptide: Lysine-specific histone demethylase 1 homolog 1 (849 aa).

Residues 1-118 (MEEGSEAQPP…RRRRKKQFPG (118 aa)) form a disordered region. Composition is skewed to low complexity over residues 34–67 (GQAA…AADA) and 89–103 (PTSS…VDDS). The segment covering 106–115 (ARKRRRRKKQ) has biased composition (basic residues). The SWIRM domain occupies 159–260 (ARELDAEALI…FGLAPSVISL (102 aa)). Residues Glu300, Arg302, Arg308, and Glu688 each contribute to the FAD site.

This sequence belongs to the flavin monoamine oxidase family. The cofactor is FAD.

Functionally, probable histone demethylase. The protein is Lysine-specific histone demethylase 1 homolog 1 of Oryza sativa subsp. japonica (Rice).